Reading from the N-terminus, the 358-residue chain is Ribosomal RNA large subunit methyltransferase M (358 aa).

Residues Ser-187, 220–223, Asp-239, Asp-259, and Asp-276 each bind S-adenosyl-L-methionine; that span reads CPGG. The active-site Proton acceptor is the Lys-305.

This sequence belongs to the class I-like SAM-binding methyltransferase superfamily. RNA methyltransferase RlmE family. RlmM subfamily. Monomer.

It localises to the cytoplasm. The catalysed reaction is cytidine(2498) in 23S rRNA + S-adenosyl-L-methionine = 2'-O-methylcytidine(2498) in 23S rRNA + S-adenosyl-L-homocysteine + H(+). In terms of biological role, catalyzes the 2'-O-methylation at nucleotide C2498 in 23S rRNA. The chain is Ribosomal RNA large subunit methyltransferase M from Shewanella woodyi (strain ATCC 51908 / MS32).